A 257-amino-acid polypeptide reads, in one-letter code: Glutamate racemase (257 aa).

Residues 12 to 13 (DS) and 44 to 45 (YG) contribute to the substrate site. The active-site Proton donor/acceptor is Cys-75. 76-77 (NT) provides a ligand contact to substrate. The active-site Proton donor/acceptor is Cys-185. Position 186–187 (186–187 (TH)) interacts with substrate.

This sequence belongs to the aspartate/glutamate racemases family.

It catalyses the reaction L-glutamate = D-glutamate. It functions in the pathway cell wall biogenesis; peptidoglycan biosynthesis. Its function is as follows. Provides the (R)-glutamate required for cell wall biosynthesis. The polypeptide is Glutamate racemase (Clostridium botulinum (strain Okra / Type B1)).